Reading from the N-terminus, the 272-residue chain is Sordarin/hypoxysordarin biosynthesis cluster protein P (272 aa).

2 N-linked (GlcNAc...) asparagine glycosylation sites follow: Asn-6 and Asn-23. A run of 2 helical transmembrane segments spans residues 31-51 (FLAS…LLFL) and 67-87 (AYHM…VDLA). N-linked (GlcNAc...) asparagine glycosylation is present at Asn-208.

Its subcellular location is the membrane. Its pathway is antibiotic biosynthesis. Its function is as follows. Part of the gene cluster that mediates the biosynthesis of sordarin and hypoxysordarin, glycoside antibiotics with a unique tetracyclic diterpene aglycone structure. First, the geranylgeranyl diphosphate synthase sdnC constructs GGDP from farnesyl diphosphate and isopentenyl diphosphate. The diterpene cyclase sdnA then catalyzes the cyclization of GGDP to afford cycloaraneosene. Cycloaraneosene is then hydroxylated four times by the putative cytochrome P450 monooxygenases sdnB, sdnE, sdnF and sdnH to give a hydroxylated cycloaraneosene derivative such as cycloaraneosene-8,9,13,19-tetraol. Although the order of the hydroxylations is unclear, at least C8, C9 and C13 of the cycloaraneosene skeleton are hydroxylated before the sordaricin formation. Dehydration of the 13-hydroxy group of the hydroxylated cycloaraneosene derivative might be catalyzed by an unassigned hypothetical protein such as sdnG and sdnP to construct the cyclopentadiene moiety. The FAD-dependent oxidoreductase sdnN is proposed to catalyze the oxidation at C9 of the hydroxylated cycloaraneosene derivative and also catalyze the Baeyer-Villiger oxidation to give the lactone intermediate. The presumed lactone intermediate would be hydrolyzed to give an acrolein moiety and a carboxylate moiety. Then, [4+2]cycloaddition would occur between the acrolein moiety and the cyclopentadiene moiety to give sordaricin. SdnN might also be involved in the [4+2]cycloaddition after the hypothesized oxidation to accommodate the oxidized product and prompt the [4+2]cycloaddition. GDP-6-deoxy-D-altrose may be biosynthesized from GDP-D-mannose by the putative GDP-mannose-4,6-dehydratase sdnI and the short-chain dehydrogenase sdnK. The glycosyltransferase sdnJ catalyzes the attachment of 6-deoxy-D-altrose onto the 19-hydroxy group of sordaricin to give 4'-O-demethylsordarin. The methyltransferase sdnD would complete the biosynthesis of sordarin. Sordarin can be further modified into hypoxysordarin. The unique acyl chain at the 3'-hydroxy group of hypoxysordarin would be constructed by an iterative type I PKS sdnO and the trans-acting polyketide methyltransferase sdnL. SdnL would be responsible for the introduction of an alpha-methyl group of the polyketide chain. Alternatively, the beta-lactamase-like protein sdnR might be responsible for the cleavage and transfer of the polyketide chain from the PKS sdnO to sordarin. Two putative cytochrome P450 monooxygenases, sdnQ and sdnT, might catalyze the epoxidations of the polyketide chain to complete the biosynthesis of hypoxysordarin. Transcriptional regulators sdnM and sdnS are presumably encoded for the transcriptional regulation of the expression of the sdn gene cluster. This chain is Sordarin/hypoxysordarin biosynthesis cluster protein P, found in Sordaria araneosa (Pleurage araneosa).